The primary structure comprises 185 residues: UPF0669 protein C6orf120 homolog (185 aa).

An N-terminal signal peptide occupies residues Met1–Cys23. Asn47 is a glycosylation site (N-linked (GlcNAc...) asparagine).

The protein belongs to the UPF0669 family.

It is found in the secreted. May be involved in induction of apoptosis in CD4(+) T-cells, but not CD8(+) T-cells or hepatocytes. The polypeptide is UPF0669 protein C6orf120 homolog (Mus musculus (Mouse)).